The primary structure comprises 158 residues: Small ribosomal subunit protein uS7 (158 aa).

It belongs to the universal ribosomal protein uS7 family. In terms of assembly, part of the 30S ribosomal subunit. Contacts proteins S9 and S11.

Its function is as follows. One of the primary rRNA binding proteins, it binds directly to 16S rRNA where it nucleates assembly of the head domain of the 30S subunit. Is located at the subunit interface close to the decoding center, probably blocks exit of the E-site tRNA. The chain is Small ribosomal subunit protein uS7 from Wolbachia pipientis subsp. Culex pipiens (strain wPip).